The primary structure comprises 38 residues: Cytochrome b6-f complex subunit 5 (38 aa).

A helical transmembrane segment spans residues 5-25 (LLSGIVLGSIPITLAGSFVTA).

This sequence belongs to the PetG family. As to quaternary structure, the 4 large subunits of the cytochrome b6-f complex are cytochrome b6, subunit IV (17 kDa polypeptide, PetD), cytochrome f and the Rieske protein, while the 4 small subunits are PetG, PetL, PetM and PetN. The complex functions as a dimer.

Its subcellular location is the plastid. It is found in the chloroplast thylakoid membrane. Component of the cytochrome b6-f complex, which mediates electron transfer between photosystem II (PSII) and photosystem I (PSI), cyclic electron flow around PSI, and state transitions. PetG is required for either the stability or assembly of the cytochrome b6-f complex. The chain is Cytochrome b6-f complex subunit 5 from Huperzia lucidula (Shining clubmoss).